A 359-amino-acid polypeptide reads, in one-letter code: Phosphate acyltransferase (359 aa).

Positions 338 to 359 (AGGVQSAPETEAPGAHPSPHVA) are disordered.

The protein belongs to the PlsX family. As to quaternary structure, homodimer. Probably interacts with PlsY.

Its subcellular location is the cytoplasm. The catalysed reaction is a fatty acyl-[ACP] + phosphate = an acyl phosphate + holo-[ACP]. The protein operates within lipid metabolism; phospholipid metabolism. Its function is as follows. Catalyzes the reversible formation of acyl-phosphate (acyl-PO(4)) from acyl-[acyl-carrier-protein] (acyl-ACP). This enzyme utilizes acyl-ACP as fatty acyl donor, but not acyl-CoA. The polypeptide is Phosphate acyltransferase (Cupriavidus taiwanensis (strain DSM 17343 / BCRC 17206 / CCUG 44338 / CIP 107171 / LMG 19424 / R1) (Ralstonia taiwanensis (strain LMG 19424))).